The following is a 1163-amino-acid chain: Receptor-type guanylate cyclase gcy-21 (1163 aa).

A signal peptide spans 1–17 (MLSAVLLLLFFIQNVQN). Topologically, residues 18-490 (FDKIELEDIT…ENCGPPANNT (473 aa)) are extracellular. N-linked (GlcNAc...) asparagine glycosylation is found at Asn-102, Asn-296, Asn-322, Asn-346, Asn-466, and Asn-488. Residues 491 to 511 (FIIVISVGVAVLIGLAIAAAF) form a helical membrane-spanning segment. The Cytoplasmic portion of the chain corresponds to 512 to 1163 (LYKRYRYERR…QIQEKTYEFS (652 aa)). One can recognise a Protein kinase domain in the interval 587–882 (FNTGSTARAG…QIKRKLKPLT (296 aa)). ATP is bound by residues 593–601 (ARAGPFGPI) and Lys-635. Residues 901-930 (TDKLEKDIAERNEELEGEKAKSEALLKMML) adopt a coiled-coil conformation. One can recognise a Guanylate cyclase domain in the interval 953 to 1083 (TVFFSDCPGF…DTVNTASRME (131 aa)).

This sequence belongs to the adenylyl cyclase class-4/guanylyl cyclase family. In terms of tissue distribution, expressed in ASG sensory neurons.

It is found in the cell membrane. The enzyme catalyses GTP = 3',5'-cyclic GMP + diphosphate. Its function is as follows. Guanylate cyclase involved in the production of the second messenger cGMP. Plays a role in dauer formation. The polypeptide is Receptor-type guanylate cyclase gcy-21 (Caenorhabditis elegans).